The primary structure comprises 278 residues: Sulfide dehydrogenase subunit beta (278 aa).

Residues 1–4 constitute a propeptide that is removed on maturation; the sequence is MFKI. An FAD-binding FR-type domain is found at 1–95; the sequence is MFKILRKERL…LGPLGKPSHI (95 aa). 3 residues coordinate [2Fe-2S] cluster: Cys222, Cys225, and Cys237.

As to quaternary structure, heterodimer of alpha and beta subunits. FAD is required as a cofactor. It depends on [2Fe-2S] cluster as a cofactor.

The protein resides in the cytoplasm. The catalysed reaction is n sulfur + hydrogen sulfide + NADP(+) = (n+1) sulfur + NADPH. It catalyses the reaction 2 reduced [2Fe-2S]-[ferredoxin] + NADP(+) + H(+) = 2 oxidized [2Fe-2S]-[ferredoxin] + NADPH. Its function is as follows. A bifunctional enzyme that catalyzes the reduction of elemental sulfur or polysulfide to hydrogen sulfide with NADPH as electron donor. Also functions as a reduced ferredoxin:NADP oxidoreductase with a very high affinity for reduced ferredoxin. Exhibits a broad specificity for various physiological and non-physiological substrates with varied reduction potentials such as methyl viologen, benzyl viologen, FAD, FMN, methylene blue, 2,6-dichlorophenolindophenol (DCIP), cytochrome C and ferricyanide with highest preference for benzyl viologen. Does not reduce fumarate, succinate, nitrate, nitrite, sulfate, sulfite or protons. Does not possess any hydrogenase activity or NADPH-dependent glutamate synthase activity. In Pyrococcus furiosus (strain ATCC 43587 / DSM 3638 / JCM 8422 / Vc1), this protein is Sulfide dehydrogenase subunit beta.